Consider the following 334-residue polypeptide: ADP-L-glycero-D-manno-heptose-6-epimerase (334 aa).

NADP(+) contacts are provided by residues 11–12, 32–33, Lys39, Lys54, 77–81, and Asn94; these read FI, DN, and QGACS. Tyr141 serves as the catalytic Proton acceptor. NADP(+) is bound at residue Lys145. Asn171 is a substrate binding site. Residues Val172 and Lys180 each coordinate NADP(+). The active-site Proton acceptor is the Lys180. Residues Arg182, His189, 203–206, Arg216, and Tyr295 each bind substrate; that span reads FGSN.

The protein belongs to the NAD(P)-dependent epimerase/dehydratase family. HldD subfamily. Homopentamer. NADP(+) is required as a cofactor.

The catalysed reaction is ADP-D-glycero-beta-D-manno-heptose = ADP-L-glycero-beta-D-manno-heptose. The protein operates within nucleotide-sugar biosynthesis; ADP-L-glycero-beta-D-manno-heptose biosynthesis; ADP-L-glycero-beta-D-manno-heptose from D-glycero-beta-D-manno-heptose 7-phosphate: step 4/4. Its function is as follows. Catalyzes the interconversion between ADP-D-glycero-beta-D-manno-heptose and ADP-L-glycero-beta-D-manno-heptose via an epimerization at carbon 6 of the heptose. The sequence is that of ADP-L-glycero-D-manno-heptose-6-epimerase from Neisseria meningitidis serogroup C / serotype 2a (strain ATCC 700532 / DSM 15464 / FAM18).